A 127-amino-acid chain; its full sequence is Probable toxin y4kH (127 aa).

It belongs to the MbcT/ParT/Res family.

In terms of biological role, probable toxic component of a type II toxin-antitoxin (TA) system. It is not known which gene encodes its antitoxin. In Sinorhizobium fredii (strain NBRC 101917 / NGR234), this protein is Probable toxin y4kH.